The primary structure comprises 187 residues: UPF0301 protein Clim_0777 (187 aa).

Belongs to the UPF0301 (AlgH) family.

The sequence is that of UPF0301 protein Clim_0777 from Chlorobium limicola (strain DSM 245 / NBRC 103803 / 6330).